Reading from the N-terminus, the 572-residue chain is Potassium-transporting ATPase potassium-binding subunit (572 aa).

11 helical membrane-spanning segments follow: residues Leu5 to Leu25, Val71 to Leu91, Val97 to Val117, Gly142 to Ile162, Ile188 to Ser208, Pro258 to Thr278, Leu292 to Ala312, Gly387 to Gly407, Ile422 to Ile442, Leu500 to Gly520, and Gly548 to Ala568.

The protein belongs to the KdpA family. The system is composed of three essential subunits: KdpA, KdpB and KdpC.

The protein localises to the cell membrane. Functionally, part of the high-affinity ATP-driven potassium transport (or Kdp) system, which catalyzes the hydrolysis of ATP coupled with the electrogenic transport of potassium into the cytoplasm. This subunit binds the extracellular potassium ions and delivers the ions to the membrane domain of KdpB through an intramembrane tunnel. This is Potassium-transporting ATPase potassium-binding subunit from Mycobacteroides abscessus (strain ATCC 19977 / DSM 44196 / CCUG 20993 / CIP 104536 / JCM 13569 / NCTC 13031 / TMC 1543 / L948) (Mycobacterium abscessus).